The following is a 462-amino-acid chain: Cysteine--tRNA ligase (462 aa).

C24 serves as a coordination point for Zn(2+). Residues 26-36 (PTVYDDAHLGH) carry the 'HIGH' region motif. Zn(2+) is bound by residues C199, H224, and E228. Residues 256 to 260 (KMSKS) carry the 'KMSKS' region motif. K259 serves as a coordination point for ATP.

The protein belongs to the class-I aminoacyl-tRNA synthetase family. As to quaternary structure, monomer. Zn(2+) is required as a cofactor.

It is found in the cytoplasm. The catalysed reaction is tRNA(Cys) + L-cysteine + ATP = L-cysteinyl-tRNA(Cys) + AMP + diphosphate. The polypeptide is Cysteine--tRNA ligase (cysS) (Campylobacter jejuni subsp. jejuni serotype O:2 (strain ATCC 700819 / NCTC 11168)).